Here is a 63-residue protein sequence, read N- to C-terminus: Keratin-associated protein 19-7 (63 aa).

It belongs to the KRTAP type 19 family. In terms of assembly, interacts with hair keratins.

In terms of biological role, in the hair cortex, hair keratin intermediate filaments are embedded in an interfilamentous matrix, consisting of hair keratin-associated proteins (KRTAP), which are essential for the formation of a rigid and resistant hair shaft through their extensive disulfide bond cross-linking with abundant cysteine residues of hair keratins. The matrix proteins include the high-sulfur and high-glycine-tyrosine keratins. This Homo sapiens (Human) protein is Keratin-associated protein 19-7 (KRTAP19-7).